A 308-amino-acid polypeptide reads, in one-letter code: Tetraacyldisaccharide 4'-kinase (308 aa).

ATP is bound at residue 63-70 (SFGGNGKT).

It belongs to the LpxK family.

The catalysed reaction is a lipid A disaccharide + ATP = a lipid IVA + ADP + H(+). It participates in glycolipid biosynthesis; lipid IV(A) biosynthesis; lipid IV(A) from (3R)-3-hydroxytetradecanoyl-[acyl-carrier-protein] and UDP-N-acetyl-alpha-D-glucosamine: step 6/6. Transfers the gamma-phosphate of ATP to the 4'-position of a tetraacyldisaccharide 1-phosphate intermediate (termed DS-1-P) to form tetraacyldisaccharide 1,4'-bis-phosphate (lipid IVA). The polypeptide is Tetraacyldisaccharide 4'-kinase (Campylobacter jejuni subsp. doylei (strain ATCC BAA-1458 / RM4099 / 269.97)).